Consider the following 220-residue polypeptide: Cytidylate kinase (220 aa).

ATP is bound at residue glycine 10 to threonine 18.

Belongs to the cytidylate kinase family. Type 1 subfamily.

The protein resides in the cytoplasm. It catalyses the reaction CMP + ATP = CDP + ADP. The catalysed reaction is dCMP + ATP = dCDP + ADP. This chain is Cytidylate kinase, found in Alkaliphilus metalliredigens (strain QYMF).